The chain runs to 506 residues: Sodium-coupled neutral amino acid symporter 2 (506 aa).

Residues 1 to 23 are disordered; the sequence is MKKAEMGRFSISPDEDSSSYSSN. The Cytoplasmic segment spans residues 1–76; that stretch reads MKKAEMGRFS…HPGTTSFGMS (76 aa). Residues 1 to 96 form a regulates protein turnover upon amino acid deprivation region; the sequence is MKKAEMGRFS…SGILGLSYAM (96 aa). Residues serine 10, serine 12, serine 21, serine 22, and serine 55 each carry the phosphoserine modification. A helical transmembrane segment spans residues 77–96; that stretch reads VFNLSNAIVGSGILGLSYAM. Residue asparagine 82 coordinates Na(+). Over 97 to 102 the chain is Extracellular; that stretch reads ANTGIA. Residues 103 to 123 form a helical membrane-spanning segment; it reads LFIILLTFVSIFSLYSVHLLL. Residues 124-158 are Cytoplasmic-facing; that stretch reads KTANEGGSLLYEQLGYKAFGLVGKLAASGSITMQN. A helical membrane pass occupies residues 159–177; that stretch reads IGAMSSYLFIVKYELPLVI. Residues 178–188 are Extracellular-facing; sequence QALTNIEDKTG. The chain crosses the membrane as a helical span at residues 189 to 209; it reads LWYLNGNYLVLLVSLVVILPL. Topologically, residues 210–217 are cytoplasmic; the sequence is SLFRNLGY. The chain crosses the membrane as a helical span at residues 218–238; the sequence is LGYTSGLSLLCMVFFLIVVIC. The Extracellular portion of the chain corresponds to 239–292; that stretch reads KKFQVPCPVEAALIINETINTTLTQPTALVPALSHNVTENDSCRPHYFIFNSQT. Cysteine 245 and cysteine 281 are joined by a disulfide. Asparagine 258 and asparagine 274 each carry an N-linked (GlcNAc...) asparagine glycan. Residues 293–313 form a helical membrane-spanning segment; it reads VYAVPILIFSFVCHPAVLPIY. Over 314–329 the chain is Cytoplasmic; it reads EELKDRSRRRMMNVSK. Residues 330 to 350 traverse the membrane as a helical segment; that stretch reads ISFFAMFLMYLLAALFGYLTF. Over 351–371 the chain is Extracellular; sequence YEHVESELLHTYSSILGTDIL. Residues 372–392 traverse the membrane as a helical segment; the sequence is LLIVRLAVLMAVTLTVPVVIF. Residue threonine 386 coordinates Na(+). The Cytoplasmic segment spans residues 393 to 413; the sequence is PIRSSVTHLLCASKDFSWWRH. Residues 414–434 traverse the membrane as a helical segment; it reads SLITVSILAFTNLLVIFVPTI. Residues 435 to 436 are Extracellular-facing; that stretch reads RD. Residues 437-457 form a helical membrane-spanning segment; sequence IFGFIGASAASMLIFILPSAF. Topologically, residues 458-472 are cytoplasmic; sequence YIKLVKKEPMKSVQK. The chain crosses the membrane as a helical span at residues 473–495; it reads IGALFFLLSGVLVMTGSMALIVL. Over 496-506 the chain is Extracellular; the sequence is DWVHNAPGGGH.

The protein belongs to the amino acid/polyamine transporter 2 family. Polyubiquitination by NEDD4L regulates the degradation and the activity of SLC38A2. As to expression, ubiquitously expressed. Expressed in neocortex. Widely expressed in the central nervous system with higher concentrations in caudal regions. Expressed by glutamatergic and GABAergic neurons together with astrocytes and other non-neuronal cells in the cerebral cortex (at protein level).

It is found in the cell membrane. The catalysed reaction is L-alanine(in) + Na(+)(in) = L-alanine(out) + Na(+)(out). The enzyme catalyses glycine(in) + Na(+)(in) = glycine(out) + Na(+)(out). It catalyses the reaction L-serine(in) + Na(+)(in) = L-serine(out) + Na(+)(out). It carries out the reaction L-proline(in) + Na(+)(in) = L-proline(out) + Na(+)(out). The catalysed reaction is L-methionine(in) + Na(+)(in) = L-methionine(out) + Na(+)(out). The enzyme catalyses L-histidine(in) + Na(+)(in) = L-histidine(out) + Na(+)(out). It catalyses the reaction L-asparagine(in) + Na(+)(in) = L-asparagine(out) + Na(+)(out). It carries out the reaction L-glutamine(in) + Na(+)(in) = L-glutamine(out) + Na(+)(out). The catalysed reaction is L-threonine(in) + Na(+)(in) = L-threonine(out) + Na(+)(out). The enzyme catalyses L-leucine(in) + Na(+)(in) = L-leucine(out) + Na(+)(out). It catalyses the reaction L-phenylalanine(in) + Na(+)(in) = L-phenylalanine(out) + Na(+)(out). With respect to regulation, inhibited by N-methyl-D-glucamine. Inhibited by choline. Allosteric regulation of sodium ions binding by pH. Symporter that cotransports neutral amino acids and sodium ions from the extracellular to the intracellular side of the cell membrane. The transport is pH-sensitive, Li(+)-intolerant, electrogenic, driven by the Na(+) electrochemical gradient and cotransports of neutral amino acids and sodium ions with a stoichiometry of 1:1. May function in the transport of amino acids at the blood-brain barrier. May function in the transport of amino acids in the supply of maternal nutrients to the fetus through the placenta. Maintains a key metabolic glutamine/glutamate balance underpinning retrograde signaling by dendritic release of the neurotransmitter glutamate. Transports L-proline in differentiating osteoblasts for the efficient synthesis of proline-enriched proteins and provides proline essential for osteoblast differentiation and bone formation during bone development. This is Sodium-coupled neutral amino acid symporter 2 from Homo sapiens (Human).